The sequence spans 361 residues: Alanine racemase (361 aa).

Lysine 34 functions as the Proton acceptor; specific for D-alanine in the catalytic mechanism. Lysine 34 is modified (N6-(pyridoxal phosphate)lysine). Arginine 129 serves as a coordination point for substrate. Tyrosine 256 functions as the Proton acceptor; specific for L-alanine in the catalytic mechanism. Methionine 304 is a substrate binding site.

Belongs to the alanine racemase family. As to quaternary structure, homodimer. Pyridoxal 5'-phosphate serves as cofactor.

The enzyme catalyses L-alanine = D-alanine. It participates in amino-acid biosynthesis; D-alanine biosynthesis; D-alanine from L-alanine: step 1/1. Its function is as follows. Catalyzes the interconversion of L-alanine and D-alanine. May also act on other amino acids. In Corynebacterium glutamicum (strain ATCC 13032 / DSM 20300 / JCM 1318 / BCRC 11384 / CCUG 27702 / LMG 3730 / NBRC 12168 / NCIMB 10025 / NRRL B-2784 / 534), this protein is Alanine racemase (alr).